The sequence spans 254 residues: Hydrolase tropI (254 aa).

Residues Cys141, Asp187, and His219 contribute to the active site.

The protein belongs to the dienelactone hydrolase family.

The protein operates within secondary metabolite biosynthesis. In terms of biological role, hydrolase; part of the gene cluster that mediates the biosynthesis of the tropolone class of fungal maleic anhydrides. The pathway begins with the synthesis of 3-methylorcinaldehyde by the non-reducing polyketide synthase (PKS) tropA. 3-methylorcinaldehyde is the substrate for the FAD-dependent monooxygenase tropB to yield a dearomatized hydroxycyclohexadione. The 2-oxoglutarate-dependent dioxygenase tropC then performs the oxidative ring expansion to provide the first tropolone metabolite stipitaldehyde. Trop D converts stipitaldehyde into stipitacetal which is in turn converted to stipitalide by the short-chain dehydrogenase/reductase tropE. The next steps involve tropF, tropG, tropH, tropI and tropJ to form successive tropolone maleic anhydrides including stipitaldehydic, stipitatonic and stipitatic acids. In Talaromyces stipitatus (strain ATCC 10500 / CBS 375.48 / QM 6759 / NRRL 1006) (Penicillium stipitatum), this protein is Hydrolase tropI.